The sequence spans 350 residues: Adenine deaminase (350 aa).

Residues histidine 24, histidine 26, and histidine 207 each contribute to the Zn(2+) site. Glutamate 210 acts as the Proton donor in catalysis. Residue aspartate 288 participates in Zn(2+) binding. Aspartate 289 contacts substrate.

It belongs to the metallo-dependent hydrolases superfamily. Adenosine and AMP deaminases family. Adenine deaminase type 2 subfamily. The cofactor is Zn(2+).

It carries out the reaction adenine + H2O + H(+) = hypoxanthine + NH4(+). Its function is as follows. Catalyzes the hydrolytic deamination of adenine to hypoxanthine. Plays an important role in the purine salvage pathway and in nitrogen catabolism. This Paraburkholderia xenovorans (strain LB400) protein is Adenine deaminase.